Consider the following 363-residue polypeptide: Mannose-1-phosphate guanyltransferase (363 aa).

The protein belongs to the transferase hexapeptide repeat family.

The protein resides in the cytoplasm. It catalyses the reaction alpha-D-mannose 1-phosphate + GTP + H(+) = GDP-alpha-D-mannose + diphosphate. The protein operates within nucleotide-sugar biosynthesis; GDP-alpha-D-mannose biosynthesis; GDP-alpha-D-mannose from alpha-D-mannose 1-phosphate (GTP route): step 1/1. In terms of biological role, involved in cell wall synthesis where it is required for glycosylation. Involved in cell cycle progression through cell-size checkpoint. Required for the correct assembly of the septum. This Schizosaccharomyces pombe (strain 972 / ATCC 24843) (Fission yeast) protein is Mannose-1-phosphate guanyltransferase (mpg1).